Reading from the N-terminus, the 347-residue chain is Olfactory receptor 1L6 (347 aa).

The Extracellular portion of the chain corresponds to 1–62; it reads MSYFYRLKLM…GLSSNPQLQK (62 aa). Asn-41 carries an N-linked (GlcNAc...) asparagine glycan. Residues 63–86 traverse the membrane as a helical segment; it reads PLFAIFLIMYLLAAVGNVLIIPAI. Over 87 to 94 the chain is Cytoplasmic; sequence YSDPRLHT. Residues 95 to 116 form a helical membrane-spanning segment; it reads PMYFFLSNLSFMDICFTTVIVP. Residues 117 to 137 are Extracellular-facing; it reads KMLVNFLSETKVISYVGCLAQ. A disulfide bridge connects residues Cys-134 and Cys-226. The helical transmembrane segment at 138–157 threads the bilayer; it reads MYFFMAFGNTDSYLLASMAI. At 158 to 176 the chain is on the cytoplasmic side; the sequence is DRLVAICNPLHYDVVMKPR. A helical transmembrane segment spans residues 177 to 195; that stretch reads HCLLMLLGSCSISHLHSLF. Residues 196-233 lie on the Extracellular side of the membrane; it reads RVLLMSRLSFCASHIIKHFFCDTQPVLKLSCSDTSSSQ. Residues 234-256 traverse the membrane as a helical segment; it reads MVVMTETLAVIVTPFLCIIFSYL. The Cytoplasmic portion of the chain corresponds to 257–273; that stretch reads RIMVTVLRIPSAAGKWK. Residues 274–296 traverse the membrane as a helical segment; sequence AFSTCGSHLTAVALFYGSIIYVY. The Extracellular portion of the chain corresponds to 297 to 309; the sequence is FRPLSMYSVVRDR. The chain crosses the membrane as a helical span at residues 310–329; it reads VATVMYTVVTPMLNPFIYSL. Topologically, residues 330 to 347 are cytoplasmic; it reads RNKDMKRGLKKLQDRIYR.

The protein belongs to the G-protein coupled receptor 1 family.

The protein localises to the cell membrane. In terms of biological role, odorant receptor. The chain is Olfactory receptor 1L6 (OR1L6) from Homo sapiens (Human).